Consider the following 121-residue polypeptide: Large ribosomal subunit protein bL20 (121 aa).

It belongs to the bacterial ribosomal protein bL20 family.

Functionally, binds directly to 23S ribosomal RNA and is necessary for the in vitro assembly process of the 50S ribosomal subunit. It is not involved in the protein synthesizing functions of that subunit. This Chlamydia felis (strain Fe/C-56) (Chlamydophila felis) protein is Large ribosomal subunit protein bL20.